The sequence spans 680 residues: Probable Xaa-Pro aminopeptidase P (680 aa).

Mn(2+) contacts are provided by Asp477, Asp488, Glu586, and Glu600.

This sequence belongs to the peptidase M24B family. The cofactor is Mn(2+).

It carries out the reaction Release of any N-terminal amino acid, including proline, that is linked to proline, even from a dipeptide or tripeptide.. In terms of biological role, catalyzes the removal of a penultimate prolyl residue from the N-termini of peptides. The sequence is that of Probable Xaa-Pro aminopeptidase P (AMPP) from Podospora anserina (strain S / ATCC MYA-4624 / DSM 980 / FGSC 10383) (Pleurage anserina).